A 247-amino-acid polypeptide reads, in one-letter code: tRNA pseudouridine synthase A 1 (247 aa).

Asp-53 acts as the Nucleophile in catalysis. Substrate is bound at residue Tyr-111.

The protein belongs to the tRNA pseudouridine synthase TruA family. Homodimer.

It catalyses the reaction uridine(38/39/40) in tRNA = pseudouridine(38/39/40) in tRNA. In terms of biological role, formation of pseudouridine at positions 38, 39 and 40 in the anticodon stem and loop of transfer RNAs. This Bacillus cereus (strain ZK / E33L) protein is tRNA pseudouridine synthase A 1.